A 235-amino-acid chain; its full sequence is Iron-sulfur cluster co-chaperone protein HscB (235 aa).

4 residues coordinate a divalent metal cation: cysteine 41, cysteine 44, cysteine 58, and cysteine 61. One can recognise a J domain in the interval 72–144; that stretch reads DYFSLMDCNR…LSRGLYLLKL (73 aa).

The protein belongs to the HscB family. As to quaternary structure, interacts with ISCU and HSPA9 to form an iron-sulfur transfer complex. Interacts with SDHAF1 (via the first LYR motif); the interaction recruits the iron-sulfur transfer complex composed of HSC20, HSPA9 and ISCU and mediates the incorporation of iron-sulfur clusters into SDHB which also interacts with HSC20. Interacts with the cytoplasmic form of ISCU and with CIA complex member CIAO1 (via LYR motif). Homodimer. Interacts with ISCU (cytoplasmic form); this interaction stabilizes the (Fe-S) clusters on ISCU. Interacts with the CIA complex member CIAO1 (via LYR motif). In terms of tissue distribution, expressed in lung, brain, stomach, spleen, ovary, testis, liver, muscle and heart.

It localises to the cytoplasm. Its subcellular location is the mitochondrion. It participates in cofactor biosynthesis; iron-sulfur cluster biosynthesis. Its function is as follows. Acts as a co-chaperone in iron-sulfur cluster assembly in mitochondria. Required for incorporation of iron-sulfur clusters into SDHB, the iron-sulfur protein subunit of succinate dehydrogenase that is involved in complex II of the mitochondrial electron transport chain. Recruited to SDHB by interaction with SDHAF1 which first binds SDHB and then recruits the iron-sulfur transfer complex formed by HSC20, HSPA9 and ISCU through direct binding to HSC20. Plays an essential role in hematopoiesis. Functionally, acts as a co-chaperone in iron-sulfur cluster assembly in the cytoplasm. Also mediates complex formation between components of the cytosolic iron-sulfur biogenesis pathway and the CIA targeting complex composed of CIAO1, DIPK1B/FAM69B and MMS19 by binding directly to the scaffold protein ISCU and to CIAO1. This facilitates iron-sulfur cluster insertion into a number of cytoplasmic and nuclear proteins including POLD1, ELP3, DPYD and PPAT. In Homo sapiens (Human), this protein is Iron-sulfur cluster co-chaperone protein HscB.